A 284-amino-acid polypeptide reads, in one-letter code: MEAIKKKMQMLKLDKENALDRAEQAEAEQKQAEERSKQLEDELAAMQKKLKGTEDELDKYSEALKDAQEKLELAEKKAADAEAEVASLNRRIQLVEEELDRAQERLATALQKLEEAEKAADESERGMKVIENRALKDEEKMELQEIQLKEAKHIAEEADRKYEEVARKLVIIEGDLERTEERAELAEFKCFELEEELKNVTNNLKFLEAQAEKYFQKKDKYEEEIKILTDKLKEAETRAEFAERSVAKLEKTIDDLEDELYAQKLKYKAISEELDHALNDMTSI.

The residue at position 1 (methionine 1) is an N-acetylmethionine. Positions methionine 1 to glutamate 40 are disordered. Residues methionine 1–isoleucine 284 are a coiled coil. A compositionally biased stretch (basic and acidic residues) spans lysine 12–glutamate 40. Threonine 53 is modified (phosphothreonine). A phosphoserine mark is found at serine 61 and serine 87. A phosphothreonine mark is found at threonine 108 and threonine 252. Tyrosine 261 is subject to Phosphotyrosine. Serine 271 is modified (phosphoserine). At threonine 282 the chain carries Phosphothreonine. Serine 283 carries the post-translational modification Phosphoserine.

It belongs to the tropomyosin family. As to quaternary structure, homodimer. Heterodimer of an alpha (TPM1, TPM3 or TPM4) and a beta (TPM2) chain. Interacts with TMOD1. Interacts with TNNT1.

Its subcellular location is the cytoplasm. It localises to the cytoskeleton. In terms of biological role, binds to actin filaments in muscle and non-muscle cells. Plays a central role, in association with the troponin complex, in the calcium dependent regulation of vertebrate striated muscle contraction. Smooth muscle contraction is regulated by interaction with caldesmon. In non-muscle cells is implicated in stabilizing cytoskeleton actin filaments. This chain is Tropomyosin alpha-3 chain (TPM3), found in Sus scrofa (Pig).